A 185-amino-acid polypeptide reads, in one-letter code: Peptidyl-tRNA hydrolase (185 aa).

Residue tyrosine 14 coordinates tRNA. Histidine 19 functions as the Proton acceptor in the catalytic mechanism. Tyrosine 64, asparagine 66, and asparagine 112 together coordinate tRNA.

Belongs to the PTH family. As to quaternary structure, monomer.

It is found in the cytoplasm. It catalyses the reaction an N-acyl-L-alpha-aminoacyl-tRNA + H2O = an N-acyl-L-amino acid + a tRNA + H(+). Its function is as follows. Hydrolyzes ribosome-free peptidyl-tRNAs (with 1 or more amino acids incorporated), which drop off the ribosome during protein synthesis, or as a result of ribosome stalling. Functionally, catalyzes the release of premature peptidyl moieties from peptidyl-tRNA molecules trapped in stalled 50S ribosomal subunits, and thus maintains levels of free tRNAs and 50S ribosomes. The polypeptide is Peptidyl-tRNA hydrolase (Pediococcus pentosaceus (strain ATCC 25745 / CCUG 21536 / LMG 10740 / 183-1w)).